Consider the following 157-residue polypeptide: Ribosomal RNA large subunit methyltransferase H (157 aa).

Residues leucine 75, glycine 106, and 125–130 each bind S-adenosyl-L-methionine; that span reads FSELTF.

It belongs to the RNA methyltransferase RlmH family. As to quaternary structure, homodimer.

Its subcellular location is the cytoplasm. It carries out the reaction pseudouridine(1915) in 23S rRNA + S-adenosyl-L-methionine = N(3)-methylpseudouridine(1915) in 23S rRNA + S-adenosyl-L-homocysteine + H(+). Functionally, specifically methylates the pseudouridine at position 1915 (m3Psi1915) in 23S rRNA. This chain is Ribosomal RNA large subunit methyltransferase H, found in Malacoplasma penetrans (strain HF-2) (Mycoplasma penetrans).